A 109-amino-acid chain; its full sequence is Cell division protein ZapA (109 aa).

A coiled-coil region spans residues 22 to 99 (EQQDALNLAA…IEQALLEQGR (78 aa)).

Belongs to the ZapA family. Type 1 subfamily. As to quaternary structure, homodimer. Interacts with FtsZ.

The protein resides in the cytoplasm. Activator of cell division through the inhibition of FtsZ GTPase activity, therefore promoting FtsZ assembly into bundles of protofilaments necessary for the formation of the division Z ring. It is recruited early at mid-cell but it is not essential for cell division. In Erwinia tasmaniensis (strain DSM 17950 / CFBP 7177 / CIP 109463 / NCPPB 4357 / Et1/99), this protein is Cell division protein ZapA.